We begin with the raw amino-acid sequence, 233 residues long: Small ribosomal subunit protein uS2 (233 aa).

The protein belongs to the universal ribosomal protein uS2 family.

This is Small ribosomal subunit protein uS2 from Clostridium perfringens (strain ATCC 13124 / DSM 756 / JCM 1290 / NCIMB 6125 / NCTC 8237 / Type A).